The sequence spans 314 residues: Annexin-like protein RJ4 (314 aa).

4 Annexin repeats span residues 10 to 81, 82 to 153, 165 to 236, and 240 to 311; these read FCAK…RWTL, DPAD…ALVT, KLAN…TAIR, and DPKK…TLLG. Gly-25, Gly-27, and Glu-67 together coordinate Ca(2+). Ile-253, Arg-255, Gly-257, Asp-297, and Thr-298 together coordinate Ca(2+).

Belongs to the annexin (TC 1.A.31.1) family. Predominantly in developing fruit.

The polypeptide is Annexin-like protein RJ4 (Fragaria ananassa (Strawberry)).